The following is a 320-amino-acid chain: Short-chain dehydrogenase TIC 32 A, chloroplastic (320 aa).

Residues 40–46, 92–93, Asn119, and Thr140 contribute to the NADP(+) site; these read GGTSGIG and DL. A substrate-binding site is contributed by Ser174. Tyr196 (proton acceptor) is an active-site residue. Positions 301 to 317 are interaction with calmodulin; sequence DTTLADKLWDFSIKLVE.

Belongs to the short-chain dehydrogenases/reductases (SDR) family. In terms of assembly, part of the Tic complex. Expressed in the dehiscence zone of developing pods.

The protein resides in the plastid. It localises to the chloroplast inner membrane. Involved in protein precursor import into chloroplasts. Maybe involved in pod abscission or dehiscence (pod shatter). The protein is Short-chain dehydrogenase TIC 32 A, chloroplastic of Brassica napus (Rape).